Consider the following 316-residue polypeptide: tRNA methyltransferase 10 homolog B (316 aa).

Positions 73–98 (EKIVAAKKSKRKQEKERRKANRVENS) form a coiled coil. The tract at residues 77–96 (AAKKSKRKQEKERRKANRVE) is disordered. Positions 113–310 (IKERLLEAKH…KGVSSRKGYV (198 aa)) constitute an SAM-dependent MTase TRM10-type domain.

The protein belongs to the class IV-like SAM-binding methyltransferase superfamily. TRM10 family.

It carries out the reaction guanosine(9) in tRNA + S-adenosyl-L-methionine = N(1)-methylguanosine(9) in tRNA + S-adenosyl-L-homocysteine + H(+). In terms of biological role, S-adenosyl-L-methionine-dependent guanine N(1)-methyltransferase that catalyzes the formation of N(1)-methylguanine at position 9 (m1G9) in tRNAs. Probably not able to catalyze formation of N(1)-methyladenine at position 9 (m1A9) in tRNAs. This is tRNA methyltransferase 10 homolog B (TRMT10B) from Bos taurus (Bovine).